Consider the following 188-residue polypeptide: Vascular endothelial growth factor A-A (188 aa).

An N-terminal signal peptide occupies residues 1–23 (MNLVVYLIQLFLAALLHLSAVKA). 3 cysteine pairs are disulfide-bonded: cysteine 49–cysteine 91, cysteine 80–cysteine 125, and cysteine 84–cysteine 127. Residue asparagine 98 is glycosylated (N-linked (GlcNAc...) asparagine).

The protein belongs to the PDGF/VEGF growth factor family. In terms of assembly, homodimer; disulfide-linked. Isoform VEGF165 binds kdr and kdrl. As to expression, predominantly expressed in regions associated with active vascularization. From 15-16 hours post-fertilization (hpf), expressed in the anterior forebrain, the mesoderm underlying and lateral to the anterior hindbrain, the mesoderm underlying and lateral to the posterior hindbrain, and in the ventral medial portions of the somites. By 30-36 hpf, expression in the somites is decreased, while strong expression is observed in the region of the developing glomeruli and in the anterior portion of the pronephric ducts, the pharyngeal arches, and the brain. By 72 hpf, expression remains only in the pronephros region.

The protein localises to the secreted. In terms of biological role, growth factor active in angiogenesis, vasculogenesis and endothelial cell growth. Induces endothelial cell proliferation, promotes cell migration, inhibits apoptosis, and induces permeabilization of blood vessels. Required for intersegmental vessel development in the tail during embryogenesis. Acts both upstream of kdr and tie1 to stimulate endothelial cell differentiation, and upstream of gata1 to stimulate hematopoietic cell differentiation. This chain is Vascular endothelial growth factor A-A (vegfaa), found in Danio rerio (Zebrafish).